The primary structure comprises 417 residues: Serine hydroxymethyltransferase (417 aa).

K54 is subject to N6-acetyllysine. (6S)-5,6,7,8-tetrahydrofolate-binding positions include L121 and 125-127 (GHL). Residue K229 is modified to N6-(pyridoxal phosphate)lysine. K250, K285, and K354 each carry N6-acetyllysine. Residue 355–357 (SPF) participates in (6S)-5,6,7,8-tetrahydrofolate binding. Position 375 is an N6-acetyllysine (K375).

It belongs to the SHMT family. As to quaternary structure, homodimer. Pyridoxal 5'-phosphate serves as cofactor.

It localises to the cytoplasm. The catalysed reaction is (6R)-5,10-methylene-5,6,7,8-tetrahydrofolate + glycine + H2O = (6S)-5,6,7,8-tetrahydrofolate + L-serine. It participates in one-carbon metabolism; tetrahydrofolate interconversion. It functions in the pathway amino-acid biosynthesis; glycine biosynthesis; glycine from L-serine: step 1/1. Its function is as follows. Catalyzes the reversible interconversion of serine and glycine with tetrahydrofolate (THF) serving as the one-carbon carrier. This reaction serves as the major source of one-carbon groups required for the biosynthesis of purines, thymidylate, methionine, and other important biomolecules. Also exhibits THF-independent aldolase activity toward beta-hydroxyamino acids, producing glycine and aldehydes, via a retro-aldol mechanism. In Escherichia coli O157:H7, this protein is Serine hydroxymethyltransferase.